Consider the following 478-residue polypeptide: Glutamate--tRNA ligase (478 aa).

The 'HIGH' region motif lies at 9 to 19; the sequence is PSPTGLLHIGT. The 'KMSKS' region motif lies at 248–252; that stretch reads KLSKR. Lys-251 provides a ligand contact to ATP.

This sequence belongs to the class-I aminoacyl-tRNA synthetase family. Glutamate--tRNA ligase type 1 subfamily. As to quaternary structure, monomer.

It localises to the cytoplasm. It catalyses the reaction tRNA(Glu) + L-glutamate + ATP = L-glutamyl-tRNA(Glu) + AMP + diphosphate. Its function is as follows. Catalyzes the attachment of glutamate to tRNA(Glu) in a two-step reaction: glutamate is first activated by ATP to form Glu-AMP and then transferred to the acceptor end of tRNA(Glu). This chain is Glutamate--tRNA ligase, found in Prochlorococcus marinus subsp. pastoris (strain CCMP1986 / NIES-2087 / MED4).